The sequence spans 463 residues: Argininosuccinate lyase (463 aa).

This sequence belongs to the lyase 1 family. Argininosuccinate lyase subfamily.

It localises to the cytoplasm. The enzyme catalyses 2-(N(omega)-L-arginino)succinate = fumarate + L-arginine. It functions in the pathway amino-acid biosynthesis; L-arginine biosynthesis; L-arginine from L-ornithine and carbamoyl phosphate: step 3/3. In Prochlorococcus marinus (strain NATL1A), this protein is Argininosuccinate lyase.